The following is a 266-amino-acid chain: Protein PYRICULARIA ORYZAE RESISTANCE 21 (266 aa).

The HMA domain occupies 1 to 68 (MGILVILVDL…IWCKAGKIIK (68 aa)). Residues Cys-12 and Cys-15 each coordinate a metal cation. A disordered region spans residues 129-156 (CEKPKPCEKPPPCKPEEPPKPPPEKPPP). Positions 142 to 156 (KPEEPPKPPPEKPPP) are enriched in basic and acidic residues.

Functionally, involved in defense responses. Contributes to slowing defense responses toward Magnaporthe oryzae. This Oryza sativa subsp. japonica (Rice) protein is Protein PYRICULARIA ORYZAE RESISTANCE 21.